Consider the following 264-residue polypeptide: Glutamate racemase (264 aa).

Substrate contacts are provided by residues 9 to 10 and 41 to 42; these read DS and YG. C72 (proton donor/acceptor) is an active-site residue. 73–74 provides a ligand contact to substrate; that stretch reads NT. The Proton donor/acceptor role is filled by C183. 184-185 is a binding site for substrate; that stretch reads TH.

It belongs to the aspartate/glutamate racemases family.

The catalysed reaction is L-glutamate = D-glutamate. Its pathway is cell wall biogenesis; peptidoglycan biosynthesis. Functionally, provides the (R)-glutamate required for cell wall biosynthesis. This is Glutamate racemase from Geobacillus sp. (strain WCH70).